The chain runs to 149 residues: Large ribosomal subunit protein uL16 (149 aa).

Belongs to the universal ribosomal protein uL16 family. Part of the 50S ribosomal subunit.

Functionally, binds 23S rRNA and is also seen to make contacts with the A and possibly P site tRNAs. In Dehalococcoides mccartyi (strain ATCC BAA-2100 / JCM 16839 / KCTC 5957 / BAV1), this protein is Large ribosomal subunit protein uL16.